The following is a 195-amino-acid chain: HTH-type transcriptional regulator TtmR (195 aa).

The HTH marR-type domain maps to 47–177 (DSQLCFAVYA…LLDNLASMRD (131 aa)). The segment at residues 93–116 (VKEIGSRLFLDSGTLTPLLKRLEA) is a DNA-binding region (H-T-H motif).

It is found in the cytoplasm. In terms of biological role, formaldehyde-responsive transcription factor that modulates resistance to stress induced by formaldehyde. Impacts the expression of a number of genes encoding transcription factors and/or involved in stress response, including efgA, and which probably collectively trigger a formaldehyde-specific physiological response. Required for optimal transition to methylotrophy. Not involved in a general stress response. This chain is HTH-type transcriptional regulator TtmR, found in Methylorubrum extorquens (strain PA1) (Methylobacterium extorquens).